Here is a 389-residue protein sequence, read N- to C-terminus: Sulfate adenylyltransferase (389 aa).

Belongs to the sulfate adenylyltransferase family.

The catalysed reaction is sulfate + ATP + H(+) = adenosine 5'-phosphosulfate + diphosphate. Its pathway is sulfur metabolism; hydrogen sulfide biosynthesis; sulfite from sulfate: step 1/3. This Deinococcus deserti (strain DSM 17065 / CIP 109153 / LMG 22923 / VCD115) protein is Sulfate adenylyltransferase.